The primary structure comprises 85 residues: Beta-toxin Ct6 (85 aa).

An N-terminal signal peptide occupies residues 1–18 (MKTFVLALCLVLIGMVYA). The LCN-type CS-alpha/beta domain occupies 19-84 (KDGYLVSKHT…VYPLPNKSCG (66 aa)). Cystine bridges form between Cys-30/Cys-83, Cys-34/Cys-59, Cys-43/Cys-64, and Cys-47/Cys-66. At Cys-83 the chain carries Cysteine amide.

Belongs to the long (4 C-C) scorpion toxin superfamily. Sodium channel inhibitor family. Beta subfamily. In terms of tissue distribution, expressed by the venom gland.

The protein resides in the secreted. Beta toxins bind voltage-independently at site-4 of sodium channels (Nav) and shift the voltage of activation toward more negative potentials thereby affecting sodium channel activation and promoting spontaneous and repetitive firing. The sequence is that of Beta-toxin Ct6 from Centruroides tecomanus (Scorpion).